We begin with the raw amino-acid sequence, 539 residues long: Acrosin-binding protein (539 aa).

The N-terminal stretch at 1-25 (MRQLAAGSLLSLLKVLLLPLAPAPA) is a signal peptide. The pro-ACR binding stretch occupies residues 26 to 106 (QDANSASTPG…ASWFESFCQF (81 aa)). Positions 26–269 (QDANSASTPG…NPFSFTPRVR (244 aa)) are cleaved as a propeptide — removed in active form. The tract at residues 186-259 (LGGQEQGQEH…PKFQSEFVSS (74 aa)) is disordered. Basic and acidic residues predominate over residues 192–211 (GQEHKQEHKQEQGQEHKQDE). Residues 212 to 238 (GQEQEEQEEEQEEEGKQEEGQGTEESL) are compositionally biased toward acidic residues. Residues 315–423 (LPHVDALLVL…TQIGTLKSGR (109 aa)) form a pro-ACR binding region.

In terms of assembly, binds specifically to the 55- and 53-kDa proacrosins and the 49-kDa acrosin intermediate, but is not capable of binding 43-kDa acrosin intermediate and 32-kDa mature acrosin. The N-terminus is blocked. In terms of processing, synthesized as a 60-kDa precursor, the 35-kDa mature form is post-translationally produced by the removal of the N-terminal half of the precursor during sperm maturation in the testis and/or epididymis. Post-translationally, phosphorylated on Tyr residues in capacitated sperm. As to expression, specifically expressed in testis.

The protein localises to the secreted. Its subcellular location is the cytoplasmic vesicle. It is found in the secretory vesicle. It localises to the acrosome. Functionally, acrosomal protein that maintains proacrosin (pro-ACR) as an enzymatically inactive zymogen in the acrosome. Involved also in the acrosome formation. This is Acrosin-binding protein from Sus scrofa (Pig).